Consider the following 1133-residue polypeptide: Protein TOPLESS-RELATED PROTEIN 2 (1133 aa).

One can recognise a LisH domain in the interval 4–36 (LSRELVFLILQFLDEEKFKETVHKLEQESAFYF). A CTLH domain is found at 34–92 (FYFNMKHFEDLVQGGEWDEVEKYLSGFTKVEDNRYSMKIFFEIRKQKYLEALDRHDRAK). WD repeat units follow at residues 344-384 (NQGS…RIAH), 451-492 (AHIG…KQYT), 495-536 (GHEA…SRVD), 539-582 (APGH…IKRT), 586-625 (FRKR…ILTT), 630-669 (GGLP…RLLR), 771-810 (ATSS…RNPN), 838-876 (NPEE…VMTT), 879-919 (APPP…VKSK), 922-961 (GHSK…KKKS), 970-1011 (RSGA…RSWS), and 1015-1054 (ALPA…LRCR). The disordered stretch occupies residues 1102–1133 (DSDPKWGVAPPQDNGTHPTISAAPAAANKPEV).

As to quaternary structure, tetramer. Interacts with D53, probably via the EAR motifs. Binds to AP2-1/TOE1, AP2-3/SNB and AP2-2/IDS1. Interacts with WOX1. Interacts with MOF1. In terms of tissue distribution, expressed in stems and panicles. Detected in roots, seeds, leaves and sheath. Expressed in the meristem and lateral organ primordia.

It localises to the nucleus. Its function is as follows. Transcriptional corepressor involved in branch formation regulation, presumably by suppressing primary branch formation and promoting secondary branch formation. Required for the cell elongation in the first internode and pollen development. Probable downstream regulator of strigolactones signaling important in axillary meristem maintenance. Acts in auxin signaling and is associated with the regulation of histone deacetylation. Essential for the function of miR172 microRNA and its target genes in regulating panicle development. This chain is Protein TOPLESS-RELATED PROTEIN 2, found in Oryza sativa subsp. japonica (Rice).